The following is an 87-amino-acid chain: ADLANGAKVFSGNCAACHMGGGNVVMANKTLKKEALEQFGMYSEDAIIYQVQHGKNAMPAFAGRLTDEQIQDVAAYVLDQAAKGWAG.

Heme c contacts are provided by C14, C17, H18, and M58.

It belongs to the cytochrome c family. PetJ subfamily. As to quaternary structure, monomer. In terms of processing, binds 1 heme c group covalently per subunit.

It localises to the cellular thylakoid lumen. In terms of biological role, functions as an electron carrier between membrane-bound cytochrome b6-f and photosystem I in oxygenic photosynthesis. This Synechococcus elongatus protein is Cytochrome c6 (petJ).